A 172-amino-acid chain; its full sequence is 3-hydroxydecanoyl-[acyl-carrier-protein] dehydratase (172 aa).

Histidine 71 is a catalytic residue.

The protein belongs to the thioester dehydratase family. FabA subfamily. In terms of assembly, homodimer.

It is found in the cytoplasm. The enzyme catalyses a (3R)-hydroxyacyl-[ACP] = a (2E)-enoyl-[ACP] + H2O. The catalysed reaction is (3R)-hydroxydecanoyl-[ACP] = (2E)-decenoyl-[ACP] + H2O. It carries out the reaction (2E)-decenoyl-[ACP] = (3Z)-decenoyl-[ACP]. It participates in lipid metabolism; fatty acid biosynthesis. Functionally, necessary for the introduction of cis unsaturation into fatty acids. Catalyzes the dehydration of (3R)-3-hydroxydecanoyl-ACP to E-(2)-decenoyl-ACP and then its isomerization to Z-(3)-decenoyl-ACP. Can catalyze the dehydratase reaction for beta-hydroxyacyl-ACPs with saturated chain lengths up to 16:0, being most active on intermediate chain length. In Enterobacter sp. (strain 638), this protein is 3-hydroxydecanoyl-[acyl-carrier-protein] dehydratase.